The chain runs to 705 residues: Translation initiation factor IF-2 (705 aa).

A disordered region spans residues 40–124 (DDQIKALDKK…QPAAPKEIPS (85 aa)). The span at 41–58 (DQIKALDKKFKKEQKNDN) shows a compositional bias: basic and acidic residues. Low complexity predominate over residues 59–77 (KQSTQNNHQKSNNQNQNKG). Residues 94-108 (KGNKKNNRNNKKNNK) are compositionally biased toward basic residues. A tr-type G domain is found at 207 to 376 (ERPAVVTIMG…GLVAEVQELK (170 aa)). The tract at residues 216–223 (GHVDHGKT) is G1. 216–223 (GHVDHGKT) provides a ligand contact to GTP. The G2 stretch occupies residues 241 to 245 (GITQH). The tract at residues 262-265 (DTPG) is G3. GTP-binding positions include 262–266 (DTPGH) and 316–319 (NKID). The interval 316 to 319 (NKID) is G4. The G5 stretch occupies residues 352–354 (SAL).

The protein belongs to the TRAFAC class translation factor GTPase superfamily. Classic translation factor GTPase family. IF-2 subfamily.

The protein localises to the cytoplasm. One of the essential components for the initiation of protein synthesis. Protects formylmethionyl-tRNA from spontaneous hydrolysis and promotes its binding to the 30S ribosomal subunits. Also involved in the hydrolysis of GTP during the formation of the 70S ribosomal complex. This chain is Translation initiation factor IF-2, found in Staphylococcus aureus (strain Mu3 / ATCC 700698).